The primary structure comprises 83 residues: uncharacterized protein (83 aa).

A run of 3 helical transmembrane segments spans residues Phe7 to Tyr26, Leu36 to Phe58, and Ile65 to Phe82.

It localises to the cell membrane. This is an uncharacterized protein from Archaeoglobus fulgidus (strain ATCC 49558 / DSM 4304 / JCM 9628 / NBRC 100126 / VC-16).